Reading from the N-terminus, the 473-residue chain is Photosystem II CP43 reaction center protein (473 aa).

Positions M1–E14 are excised as a propeptide. T15 is subject to N-acetylthreonine. T15 is modified (phosphothreonine). Helical transmembrane passes span L69–A93, L134–N155, K178–T200, K255–S275, and W291–A312. Position 367 (E367) interacts with [CaMn4O5] cluster. A helical transmembrane segment spans residues R447–P471.

The protein belongs to the PsbB/PsbC family. PsbC subfamily. PSII is composed of 1 copy each of membrane proteins PsbA, PsbB, PsbC, PsbD, PsbE, PsbF, PsbH, PsbI, PsbJ, PsbK, PsbL, PsbM, PsbT, PsbX, PsbY, PsbZ, Psb30/Ycf12, at least 3 peripheral proteins of the oxygen-evolving complex and a large number of cofactors. It forms dimeric complexes. Requires Binds multiple chlorophylls and provides some of the ligands for the Ca-4Mn-5O cluster of the oxygen-evolving complex. It may also provide a ligand for a Cl- that is required for oxygen evolution. PSII binds additional chlorophylls, carotenoids and specific lipids. as cofactor.

It localises to the plastid. The protein localises to the chloroplast thylakoid membrane. In terms of biological role, one of the components of the core complex of photosystem II (PSII). It binds chlorophyll and helps catalyze the primary light-induced photochemical processes of PSII. PSII is a light-driven water:plastoquinone oxidoreductase, using light energy to abstract electrons from H(2)O, generating O(2) and a proton gradient subsequently used for ATP formation. The polypeptide is Photosystem II CP43 reaction center protein (Acorus calamus var. americanus (American sweet flag)).